Here is a 210-residue protein sequence, read N- to C-terminus: Outer-membrane lipoprotein LolB (210 aa).

Residues 1–18 (MKKLTKLLSLTLLFALAG) form the signal peptide. The N-palmitoyl cysteine moiety is linked to residue Cys19. Cys19 is lipidated: S-diacylglycerol cysteine.

This sequence belongs to the LolB family. As to quaternary structure, monomer.

It is found in the cell outer membrane. In terms of biological role, plays a critical role in the incorporation of lipoproteins in the outer membrane after they are released by the LolA protein. The chain is Outer-membrane lipoprotein LolB from Glaesserella parasuis serovar 5 (strain SH0165) (Haemophilus parasuis).